Reading from the N-terminus, the 85-residue chain is UPF0181 protein YPO1774/y2534/YP_1619 (85 aa).

A disordered region spans residues 50-85 (QAMAIFEDHDFDEHTESDYRRDDEPDADDIEDPYEG). Basic and acidic residues predominate over residues 55–72 (FEDHDFDEHTESDYRRDD). Positions 73–85 (EPDADDIEDPYEG) are enriched in acidic residues.

It belongs to the UPF0181 family.

The sequence is that of UPF0181 protein YPO1774/y2534/YP_1619 from Yersinia pestis.